The following is a 545-amino-acid chain: Solute carrier family 22 member 6 (545 aa).

Residues 1 to 9 (MAFNDLLKQ) are Cytoplasmic-facing. The helical transmembrane segment at 10–30 (VGGVGRFQLIQVTMVVAPLLL) threads the bilayer. Residues 31–129 (MASHNTLQNF…LVCSHRAFRQ (99 aa)) lie on the Extracellular side of the membrane. N-linked (GlcNAc...) asparagine glycans are attached at residues asparagine 39, asparagine 56, asparagine 86, asparagine 91, and asparagine 107. A helical membrane pass occupies residues 130 to 150 (LAQSLFMVGVLLGAMMFGYLA). The Cytoplasmic segment spans residues 151 to 157 (DRLGRRK). A helical membrane pass occupies residues 158–177 (VLILNYLQTAVSGTCAAYAP). The N-linked (GlcNAc...) asparagine glycan is linked to asparagine 178. Residues 178-180 (NYT) are Extracellular-facing. The chain crosses the membrane as a helical span at residues 181–201 (VYCIFRLLSGMSLASIAINCM). Topologically, residues 202-218 (TLNMEWMPIHTRAYVGT) are cytoplasmic. The chain crosses the membrane as a helical span at residues 219–239 (LIGYVYSLGQFLLAGIAYAVP). The Extracellular segment spans residues 240–242 (HWR). Residues 243 to 263 (HLQLAVSVPFFVAFIYSWFFI) form a helical membrane-spanning segment. The Cytoplasmic segment spans residues 264 to 331 (ESARWYSSSG…ELLRCPTLRR (68 aa)). The chain crosses the membrane as a helical span at residues 332–352 (LFLCLSMLWFATSFAYYGLVM). Over 353-362 (DLQGFGVSMY) the chain is Extracellular. A helical transmembrane segment spans residues 363-383 (LIQVIFGAVDLPAKFVCFLVI). Residues 384-389 (NSMGRR) lie on the Cytoplasmic side of the membrane. A helical transmembrane segment spans residues 390–410 (PAQLASLLLAGICILVNGIIP). The Extracellular segment spans residues 411–419 (RGHTIIRTS). The chain crosses the membrane as a helical span at residues 420-440 (LAVLGKGCLASSFNCIFLYTG). Topologically, residues 441–450 (ELYPTMIRQT) are cytoplasmic. The helical transmembrane segment at 451–471 (GLGMGSTMARVGSIVSPLISM) threads the bilayer. The Extracellular portion of the chain corresponds to 472 to 478 (TAEFYPS). The chain crosses the membrane as a helical span at residues 479–499 (IPLFIFGAVPVAASAVTALLP). Over 500 to 545 (ETLGQPLPDTVQDLKSRSRGKQKQQQLEQQKQMIPLQVSTQEKNGL) the chain is Cytoplasmic. The interval 515–545 (SRSRGKQKQQQLEQQKQMIPLQVSTQEKNGL) is disordered. Positions 522–531 (KQQQLEQQKQ) are enriched in low complexity. Residues 536–545 (QVSTQEKNGL) show a composition bias toward polar residues.

The protein belongs to the major facilitator (TC 2.A.1) superfamily. Organic cation transporter (TC 2.A.1.19) family. In terms of processing, glycosylated. Glycosylation is necessary for proper targeting of the transporter to the plasma membrane. Expressed in kidney. In kidney, restricted to the proximal convoluted tubule (representing S1 and S2 segments). In brain, expressed in neurons of the cortex cerebri and hippocampus as well as in the ependymal cell layer of the choroid plexus.

Its subcellular location is the basolateral cell membrane. It is found in the basal cell membrane. It catalyses the reaction (6R)-L-erythro-5,6,7,8-tetrahydrobiopterin(out) + a dicarboxylate(in) = (6R)-L-erythro-5,6,7,8-tetrahydrobiopterin(in) + a dicarboxylate(out). The catalysed reaction is L-erythro-7,8-dihydrobiopterin(out) + a dicarboxylate(in) = L-erythro-7,8-dihydrobiopterin(in) + a dicarboxylate(out). It carries out the reaction L-sepiapterin(out) + a dicarboxylate(in) = L-sepiapterin(in) + a dicarboxylate(out). The enzyme catalyses prostaglandin F2alpha(out) + a dicarboxylate(in) = prostaglandin F2alpha(in) + a dicarboxylate(out). It catalyses the reaction prostaglandin E2(out) + a dicarboxylate(in) = prostaglandin E2(in) + a dicarboxylate(out). The catalysed reaction is 3',5'-cyclic AMP(out) + a dicarboxylate(in) = 3',5'-cyclic AMP(in) + a dicarboxylate(out). It carries out the reaction 3',5'-cyclic GMP(out) + a dicarboxylate(in) = 3',5'-cyclic GMP(in) + a dicarboxylate(out). The enzyme catalyses urate(out) + a dicarboxylate(in) = urate(in) + a dicarboxylate(out). It catalyses the reaction kynurenate(out) + glutarate(in) = kynurenate(in) + glutarate(out). The catalysed reaction is (indol-3-yl)acetate(out) + a dicarboxylate(in) = (indol-3-yl)acetate(in) + a dicarboxylate(out). It carries out the reaction indoxyl sulfate(out) + a dicarboxylate(in) = indoxyl sulfate(in) + a dicarboxylate(out). The enzyme catalyses N-benzoylglycine(out) + a dicarboxylate(in) = N-benzoylglycine(in) + a dicarboxylate(out). It catalyses the reaction 3-carboxy-4-methyl-5-propyl-2-furanpropanoate(out) + a dicarboxylate(in) = 3-carboxy-4-methyl-5-propyl-2-furanpropanoate(in) + a dicarboxylate(out). Its function is as follows. Secondary active transporter that functions as a Na(+)-independent organic anion (OA)/dicarboxylate antiporter where the uptake of one molecule of OA into the cell is coupled with an efflux of one molecule of intracellular dicarboxylate such as 2-oxoglutarate or glutarate. Mediates the uptake of OA across the basolateral side of proximal tubule epithelial cells, thereby contributing to the renal elimination of endogenous OA from the systemic circulation into the urine. Functions as a biopterin transporters involved in the uptake and the secretion of coenzymes tetrahydrobiopterin (BH4), dihydrobiopterin (BH2) and sepiapterin to urine, thereby determining baseline levels of blood biopterins. Transports prostaglandin E2 (PGE2) and prostaglandin F2-alpha (PGF2-alpha) and may contribute to their renal excretion. Involved in the transport of neuroactive tryptophan metabolites kynurenate (KYNA) and xanthurenate (XA). May transport glutamate. Also involved in the disposition of uremic toxins and potentially toxic xenobiotics by the renal organic anion secretory pathway, helping reduce their undesired toxicological effects on the body. Uremic toxins include the indoxyl sulfate (IS), hippurate/N-benzoylglycine (HA), indole acetate (IA) and 3-carboxy-4- methyl-5-propyl-2-furanpropionate(CMPF) and urate. Xenobiotics include the mycotoxin ochratoxin (OTA). May also contribute to the transport of organic compounds in testes across the blood-testis-barrier. This chain is Solute carrier family 22 member 6, found in Mus musculus (Mouse).